A 499-amino-acid chain; its full sequence is Glycerol kinase (499 aa).

An ADP-binding site is contributed by Thr-14. Thr-14, Thr-15, and Ser-16 together coordinate ATP. Thr-14 lines the sn-glycerol 3-phosphate pocket. Position 18 (Arg-18) interacts with ADP. Arg-84, Glu-85, Tyr-136, and Asp-245 together coordinate sn-glycerol 3-phosphate. Residues Arg-84, Glu-85, Tyr-136, Asp-245, and Gln-246 each coordinate glycerol. Residues Thr-267 and Gly-310 each coordinate ADP. Positions 267, 310, 314, and 411 each coordinate ATP. ADP-binding residues include Gly-411 and Asn-415.

This sequence belongs to the FGGY kinase family.

The catalysed reaction is glycerol + ATP = sn-glycerol 3-phosphate + ADP + H(+). It participates in polyol metabolism; glycerol degradation via glycerol kinase pathway; sn-glycerol 3-phosphate from glycerol: step 1/1. Its activity is regulated as follows. Inhibited by fructose 1,6-bisphosphate (FBP). Functionally, key enzyme in the regulation of glycerol uptake and metabolism. Catalyzes the phosphorylation of glycerol to yield sn-glycerol 3-phosphate. In Nitrosomonas eutropha (strain DSM 101675 / C91 / Nm57), this protein is Glycerol kinase.